An 860-amino-acid polypeptide reads, in one-letter code: Probable beta-glucosidase A (860 aa).

Residues 1 to 19 (MRFTSIEAVALTAVSLASA) form the signal peptide. 3 N-linked (GlcNAc...) asparagine glycosylation sites follow: N61, N211, and N252. The active site involves D280. N-linked (GlcNAc...) asparagine glycosylation is found at N315, N322, N354, N387, N442, N523, N542, N564, N658, N690, and N712.

It belongs to the glycosyl hydrolase 3 family.

It localises to the secreted. It catalyses the reaction Hydrolysis of terminal, non-reducing beta-D-glucosyl residues with release of beta-D-glucose.. Its pathway is glycan metabolism; cellulose degradation. Functionally, beta-glucosidases are one of a number of cellulolytic enzymes involved in the degradation of cellulosic biomass. Catalyzes the last step releasing glucose from the inhibitory cellobiose. The protein is Probable beta-glucosidase A (bglA) of Aspergillus niger (strain ATCC MYA-4892 / CBS 513.88 / FGSC A1513).